Consider the following 304-residue polypeptide: Proteasome subunit beta (304 aa).

The propeptide at 1 to 65 (MTWPHFEQLA…LTPTDAVPHG (65 aa)) is removed in mature form; by autocatalysis. The active-site Nucleophile is threonine 66.

This sequence belongs to the peptidase T1B family. The 20S proteasome core is composed of 14 alpha and 14 beta subunits that assemble into four stacked heptameric rings, resulting in a barrel-shaped structure. The two inner rings, each composed of seven catalytic beta subunits, are sandwiched by two outer rings, each composed of seven alpha subunits. The catalytic chamber with the active sites is on the inside of the barrel. Has a gated structure, the ends of the cylinder being occluded by the N-termini of the alpha-subunits. Is capped by the proteasome-associated ATPase, ARC.

Its subcellular location is the cytoplasm. The enzyme catalyses Cleavage of peptide bonds with very broad specificity.. It participates in protein degradation; proteasomal Pup-dependent pathway. Its activity is regulated as follows. The formation of the proteasomal ATPase ARC-20S proteasome complex, likely via the docking of the C-termini of ARC into the intersubunit pockets in the alpha-rings, may trigger opening of the gate for substrate entry. Interconversion between the open-gate and close-gate conformations leads to a dynamic regulation of the 20S proteasome proteolysis activity. Its function is as follows. Component of the proteasome core, a large protease complex with broad specificity involved in protein degradation. In Mycobacterium sp. (strain JLS), this protein is Proteasome subunit beta.